We begin with the raw amino-acid sequence, 341 residues long: uncharacterized protein (341 aa).

Catalysis depends on residues serine 111, aspartate 247, and histidine 275.

The protein belongs to the DmpD/TodF/XylF esterase family.

This is an uncharacterized protein from Mycobacterium bovis (strain ATCC BAA-935 / AF2122/97).